Consider the following 400-residue polypeptide: Lipid-A-disaccharide synthase (400 aa).

The protein belongs to the LpxB family.

It catalyses the reaction a lipid X + a UDP-2-N,3-O-bis[(3R)-3-hydroxyacyl]-alpha-D-glucosamine = a lipid A disaccharide + UDP + H(+). The protein operates within bacterial outer membrane biogenesis; LPS lipid A biosynthesis. Its function is as follows. Condensation of UDP-2,3-diacylglucosamine and 2,3-diacylglucosamine-1-phosphate to form lipid A disaccharide, a precursor of lipid A, a phosphorylated glycolipid that anchors the lipopolysaccharide to the outer membrane of the cell. The chain is Lipid-A-disaccharide synthase from Acidobacterium capsulatum (strain ATCC 51196 / DSM 11244 / BCRC 80197 / JCM 7670 / NBRC 15755 / NCIMB 13165 / 161).